The chain runs to 566 residues: Serine/threonine-protein kinase ppk14 (566 aa).

The span at 1–31 shows a compositional bias: basic and acidic residues; it reads MNELHDGESSEEGRINVEDHLEEAKKDDTGH. Disordered stretches follow at residues 1-39 and 60-152; these read MNEL…GTAK and SRKK…EKLK. Residues 74–85 are compositionally biased toward polar residues; that stretch reads AANQSPSGAPES. A compositionally biased stretch (basic residues) spans 119 to 129; it reads SFFKSGRKKKD. The span at 134-145 shows a compositional bias: polar residues; sequence RNVSRSNGADTS. Residues 195–485 enclose the Protein kinase domain; it reads FEKVFLLGKG…AADVKLHPFF (291 aa). ATP is bound by residues 201–209 and K224; that span reads LGKGDVGRV. The active-site Proton acceptor is the D320. T379 is modified (phosphothreonine). S381 is subject to Phosphoserine. T385 is modified (phosphothreonine).

This sequence belongs to the protein kinase superfamily. Ser/Thr protein kinase family. KIN82 subfamily.

It catalyses the reaction L-seryl-[protein] + ATP = O-phospho-L-seryl-[protein] + ADP + H(+). It carries out the reaction L-threonyl-[protein] + ATP = O-phospho-L-threonyl-[protein] + ADP + H(+). The chain is Serine/threonine-protein kinase ppk14 (ppk14) from Schizosaccharomyces pombe (strain 972 / ATCC 24843) (Fission yeast).